The following is a 786-amino-acid chain: MTEVKSKETRAPSSARDGAVLLQAPPSRGEAEGIDVALDGLLYPRSSDEEEEEEENEEEEEEEEPQQREEEEEEEEEDRDCPSYRPGGGSLSKDCLDSVLDTFLAPAAHAAPWSLFGPEVPEVPVAPMSRGPEQKAVDAGPGAPGPSQPRPGAPLWPGADSLNVAVKARPGPEDASENRAPGLPGAEERGFPERDAGPGEGGLAPAAAASPAAVEPGAGQDYLHVPILPLNSAFLASRTRQLLDVEAAYDGSAFGPRSSPSVPAADLAEYGYPPPDGKEGPFAYGEFQSALKIKEEGVGLPAAPPPFLGAKAAPADFAQPPRAGQEPSLECVLYKAEPPLLPGAYGPPAAPDSLPSTSAAPPGLYSPLGLNGHHQALGFPAAVLKEGLPQLCPPYLGYVRPDTETSQSSQYSFESLPQKICLICGDEASGCHYGVLTCGSCKVFFKRAMEGQHNYLCAGRNDCIVDKIRRKNCPACRLRKCCQAGMVLGGRKFKKLNKMKVVRTLDVALQQPAVLQDETQSLTQRLSFSPNQEIPFVPPMISVLRGIEPEVVYAGYDNTKPETPSSLLTSLNHLCERQLLCVVKWSKLLPGFRNLHIDDQITLIQYSWMSLMVFAMGWRSYKHVSGQMLYFAPDLILNEQRMKESSFYSLCLSMWQLPQEFVRLQVSQEEFLCMKALLLLNTIPLEGLRSQSQFDEMRTSYIRELVKAIGLRQKGVVANSQRFYQLTKLMDSMHDLVKQLHLFCLNTFLQSRALSVEFPEMMSEVIAAQLPKILAGMVKPLLFHKK.

Positions 1 to 10 (MTEVKSKETR) are enriched in basic and acidic residues. Disordered regions lie at residues 1–95 (MTEV…SKDC), 110–212 (AAPW…ASPA), and 252–279 (SAFG…DGKE). The interval 1–420 (MTEVKSKETR…YSFESLPQKI (420 aa)) is modulating, Pro-Rich. Lysine 7 is covalently cross-linked (Glycyl lysine isopeptide (Lys-Gly) (interchain with G-Cter in SUMO)). Over residues 48–79 (DEEEEEEENEEEEEEEEPQQREEEEEEEEEDR) the composition is skewed to acidic residues. A compositionally biased stretch (pro residues) spans 143-154 (APGPSQPRPGAP). A compositionally biased stretch (basic and acidic residues) spans 186–197 (AEERGFPERDAG). Residues 203–212 (LAPAAAASPA) are compositionally biased toward low complexity. Phosphoserine occurs at positions 210 and 259. Lysine 294 participates in a covalent cross-link: Glycyl lysine isopeptide (Lys-Gly) (interchain with G-Cter in SUMO); alternate. Lysine 294 participates in a covalent cross-link: Glycyl lysine isopeptide (Lys-Gly) (interchain with G-Cter in ubiquitin); alternate. A Glycyl lysine isopeptide (Lys-Gly) (interchain with G-Cter in SUMO) cross-link involves residue lysine 385. 2 consecutive NR C4-type zinc fingers follow at residues 421-441 (CLIC…CGSC) and 457-481 (CAGR…LRKC). The segment at residues 421-486 (CLICGDEASG…RLRKCCQAGM (66 aa)) is a DNA-binding region (nuclear receptor). The residue at position 529 (serine 529) is a Phosphoserine. Positions 532–766 (QEIPFVPPMI…EFPEMMSEVI (235 aa)) constitute an NR LBD domain.

It belongs to the nuclear hormone receptor family. NR3 subfamily. In terms of processing, phosphorylation of Ser-529 is sharply increased upon progesterone treatment, whereas phosphorylation of Ser-210 and Ser-259 is modestly induced by progesterone. Ubiquitinated. Ubiquitination is increased by progesterone and represses sumoylation at the same site. Post-translationally, sumoylation is hormone-dependent and represses transcriptional activity. Sumoylation on all three sites is enhanced by PIAS3. Desumoylated by SENP1. Sumoylation on Lys-385, the main site of sumoylation, is repressed by ubiquitination on the same site. As to expression, oviduct and bursa of Fabricius.

It is found in the nucleus. The protein localises to the cytoplasm. Functionally, the steroid hormones and their receptors are involved in the regulation of eukaryotic gene expression and affect cellular proliferation and differentiation in target tissues. In Gallus gallus (Chicken), this protein is Progesterone receptor (PGR).